The primary structure comprises 152 residues: Xanthine-guanine phosphoribosyltransferase (152 aa).

Residues arginine 37–glycine 38, arginine 69, and aspartate 88–threonine 96 each bind 5-phospho-alpha-D-ribose 1-diphosphate. Arginine 69 contacts GMP. Position 89 (aspartate 89) interacts with Mg(2+). Guanine-binding residues include aspartate 92 and isoleucine 135. Xanthine-binding residues include aspartate 92 and isoleucine 135. GMP-binding positions include aspartate 92 to threonine 96 and tryptophan 134 to isoleucine 135.

This sequence belongs to the purine/pyrimidine phosphoribosyltransferase family. XGPT subfamily. Homotetramer. Mg(2+) serves as cofactor.

The protein resides in the cell inner membrane. The enzyme catalyses GMP + diphosphate = guanine + 5-phospho-alpha-D-ribose 1-diphosphate. It carries out the reaction XMP + diphosphate = xanthine + 5-phospho-alpha-D-ribose 1-diphosphate. The catalysed reaction is IMP + diphosphate = hypoxanthine + 5-phospho-alpha-D-ribose 1-diphosphate. It functions in the pathway purine metabolism; GMP biosynthesis via salvage pathway; GMP from guanine: step 1/1. Its pathway is purine metabolism; XMP biosynthesis via salvage pathway; XMP from xanthine: step 1/1. Its function is as follows. Purine salvage pathway enzyme that catalyzes the transfer of the ribosyl-5-phosphate group from 5-phospho-alpha-D-ribose 1-diphosphate (PRPP) to the N9 position of the 6-oxopurines guanine and xanthine to form the corresponding ribonucleotides GMP (guanosine 5'-monophosphate) and XMP (xanthosine 5'-monophosphate), with the release of PPi. To a lesser extent, also acts on hypoxanthine. This is Xanthine-guanine phosphoribosyltransferase from Pectobacterium carotovorum subsp. carotovorum (strain PC1).